The primary structure comprises 59 residues: UPF0291 protein CPR_1073 (59 aa).

Residues 1–30 (MNIDELTKRINELHKKHKEEGLSEDEHKER) form a disordered region.

This sequence belongs to the UPF0291 family.

The protein resides in the cytoplasm. The protein is UPF0291 protein CPR_1073 of Clostridium perfringens (strain SM101 / Type A).